The sequence spans 309 residues: Porphobilinogen deaminase (309 aa).

Cysteine 244 is subject to S-(dipyrrolylmethanemethyl)cysteine.

The protein belongs to the HMBS family. As to quaternary structure, monomer. Requires dipyrromethane as cofactor.

It carries out the reaction 4 porphobilinogen + H2O = hydroxymethylbilane + 4 NH4(+). The protein operates within porphyrin-containing compound metabolism; protoporphyrin-IX biosynthesis; coproporphyrinogen-III from 5-aminolevulinate: step 2/4. Its function is as follows. Tetrapolymerization of the monopyrrole PBG into the hydroxymethylbilane pre-uroporphyrinogen in several discrete steps. The sequence is that of Porphobilinogen deaminase from Listeria monocytogenes serotype 4a (strain HCC23).